Consider the following 127-residue polypeptide: Turripeptide OL172 (127 aa).

The N-terminal stretch at 1-20 is a signal peptide; it reads MFSTLIFLTAVTLLMMPSQT. Residues 42–43 constitute a propeptide that is removed on maturation; sequence QR. Residue Gln44 is modified to Pyrrolidone carboxylic acid. Positions 73–75 are excised as a propeptide; it reads QRK. The residue at position 76 (Gln76) is a Pyrrolidone carboxylic acid. The propeptide occupies 104 to 106; it reads QRK. Gln107 bears the Pyrrolidone carboxylic acid mark.

In terms of processing, the turripeptide OL172 conotoxin-like contains 2 disulfide bonds. As to expression, expressed by the venom duct.

Its subcellular location is the secreted. In terms of biological role, acts as a neurotoxin by inhibiting an ion channel. The chain is Turripeptide OL172 from Iotyrris olangoensis (Sea snail).